A 657-amino-acid chain; its full sequence is Keratinocyte proline-rich protein (657 aa).

Disordered regions lie at residues 285–320, 425–493, and 517–568; these read QGTY…SPPR, HPFP…PSPE, and QPVP…CGQP. Low complexity predominate over residues 292–302; sequence TSQRRSQSTSR. Over residues 434-444 the composition is skewed to basic and acidic residues; sequence QHLDRSPESSR. At S442 the chain carries Phosphoserine. Pro residues-rich tracts occupy residues 449 to 493, 517 to 530, and 539 to 561; these read VPAP…PSPE, QPVP…VPRP, and GPRP…PCSS.

It is found in the cytoplasm. The chain is Keratinocyte proline-rich protein from Mus musculus (Mouse).